A 400-amino-acid chain; its full sequence is Exodeoxyribonuclease 7 large subunit (400 aa).

The protein belongs to the XseA family. As to quaternary structure, heterooligomer composed of large and small subunits.

The protein resides in the cytoplasm. It carries out the reaction Exonucleolytic cleavage in either 5'- to 3'- or 3'- to 5'-direction to yield nucleoside 5'-phosphates.. In terms of biological role, bidirectionally degrades single-stranded DNA into large acid-insoluble oligonucleotides, which are then degraded further into small acid-soluble oligonucleotides. This chain is Exodeoxyribonuclease 7 large subunit, found in Clostridium perfringens (strain SM101 / Type A).